A 459-amino-acid polypeptide reads, in one-letter code: FBD-associated F-box protein At5g27750 (459 aa).

Residues 4 to 50 enclose the F-box domain; the sequence is FDRISELPESLITQILLCLPTKDSVKTSVLSTRWKNLWLNVPGLDLT. Residues 374–426 form the FBD domain; sequence TEELNLINVPRCIVSTLECVEIKGLFEWEEEEMKIARYFLENAAVLKKLTMSF.

The sequence is that of FBD-associated F-box protein At5g27750 from Arabidopsis thaliana (Mouse-ear cress).